The following is a 502-amino-acid chain: Probable ADP-dependent glucokinase (502 aa).

The first 32 residues, Met-1–Ser-32, serve as a signal peptide directing secretion. One can recognise an ADPK domain in the interval Ser-44–Asn-497. Residues Asn-89 and Asn-190 are each glycosylated (N-linked (GlcNAc...) asparagine). Positions 290, 320, and 481 each coordinate Mg(2+). Asp-481 functions as the Proton acceptor in the catalytic mechanism.

It belongs to the ADP-dependent glucokinase family. Monomer. Requires Mg(2+) as cofactor.

Its subcellular location is the secreted. The enzyme catalyses D-glucose + ADP = D-glucose 6-phosphate + AMP + H(+). It participates in carbohydrate degradation; glycolysis. Catalyzes the phosphorylation of D-glucose to D-glucose 6-phosphate using ADP as the phosphate donor. GDP and CDP can replace ADP, but with reduced efficiency. This chain is Probable ADP-dependent glucokinase, found in Caenorhabditis elegans.